The primary structure comprises 302 residues: RNA polymerase sigma factor RpoH (302 aa).

A sigma-70 factor domain-2 region spans residues 57–126; that stretch reads LVTSHLRLVA…IQEYILRSWS (70 aa). Residues 81–84 carry the Interaction with polymerase core subunit RpoC motif; that stretch reads ELIS. Positions 235 to 286 are sigma-70 factor domain-4; it reads AMDKLNDREKHILTERRLSDNPKTLEELSQVYGVSRERVRQIEVRAFDKLQK. Positions 259–278 form a DNA-binding region, H-T-H motif; sequence LEELSQVYGVSRERVRQIEV.

The protein belongs to the sigma-70 factor family. RpoH subfamily. As to quaternary structure, interacts with the RNA polymerase core enzyme.

Its subcellular location is the cytoplasm. Its function is as follows. Sigma factors are initiation factors that promote the attachment of RNA polymerase to specific initiation sites and are then released. This sigma factor is involved in regulation of expression of heat shock genes. The protein is RNA polymerase sigma factor RpoH of Zymomonas mobilis subsp. mobilis (strain ATCC 31821 / ZM4 / CP4).